The primary structure comprises 240 residues: ATP synthase subunit a (240 aa).

The next 6 membrane-spanning stretches (helical) occupy residues 41–61 (WLVMAFLFLVSKFTLGNLEII), 92–112 (FFPMIATFALYIAVANLIGLI), 121–141 (SINTTLALTLIVWATHHVIGF), 152–172 (FIGPMKWLVPLMLPIELISNF), 191–211 (VLLGILFGLAGMFFAPLPIMV), and 212–232 (LGVLVSLVQAMVFVLLTVVYF).

The protein belongs to the ATPase A chain family. In terms of assembly, F-type ATPases have 2 components, CF(1) - the catalytic core - and CF(0) - the membrane proton channel. CF(1) has five subunits: alpha(3), beta(3), gamma(1), delta(1), epsilon(1). CF(0) has three main subunits: a(1), b(2) and c(9-12). The alpha and beta chains form an alternating ring which encloses part of the gamma chain. CF(1) is attached to CF(0) by a central stalk formed by the gamma and epsilon chains, while a peripheral stalk is formed by the delta and b chains.

The protein localises to the cell inner membrane. Key component of the proton channel; it plays a direct role in the translocation of protons across the membrane. This is ATP synthase subunit a from Desulfotalea psychrophila (strain LSv54 / DSM 12343).